A 212-amino-acid polypeptide reads, in one-letter code: Methylthioribulose-1-phosphate dehydratase (212 aa).

The Zn(2+) site is built by histidine 103 and histidine 105.

The protein belongs to the aldolase class II family. MtnB subfamily. Zn(2+) is required as a cofactor.

It catalyses the reaction 5-(methylsulfanyl)-D-ribulose 1-phosphate = 5-methylsulfanyl-2,3-dioxopentyl phosphate + H2O. It participates in amino-acid biosynthesis; L-methionine biosynthesis via salvage pathway; L-methionine from S-methyl-5-thio-alpha-D-ribose 1-phosphate: step 2/6. In terms of biological role, catalyzes the dehydration of methylthioribulose-1-phosphate (MTRu-1-P) into 2,3-diketo-5-methylthiopentyl-1-phosphate (DK-MTP-1-P). This chain is Methylthioribulose-1-phosphate dehydratase, found in Sorangium cellulosum (strain So ce56) (Polyangium cellulosum (strain So ce56)).